The chain runs to 292 residues: Nucleotide-binding protein azo0399 (292 aa).

8 to 15 (GLSGSGKS) contacts ATP. Residue 57-60 (DMRS) coordinates GTP.

It belongs to the RapZ-like family.

In terms of biological role, displays ATPase and GTPase activities. The sequence is that of Nucleotide-binding protein azo0399 from Azoarcus sp. (strain BH72).